The sequence spans 322 residues: NADH-cytochrome b5 reductase 2 (322 aa).

The helical transmembrane segment at 30–46 threads the bilayer; the sequence is LAPVYVAVGLAGLGVGL. Residues 71–176 form the FAD-binding FR-type domain; the sequence is QGWVNLKLSD…KGPLPKYPWE (106 aa). Residue 179–214 participates in FAD binding; sequence KHKHICLVAGGTGITPMYQLAREIFKNPEDKTKVTL.

This sequence belongs to the flavoprotein pyridine nucleotide cytochrome reductase family. FAD is required as a cofactor.

Its subcellular location is the mitochondrion outer membrane. It carries out the reaction 2 Fe(III)-[cytochrome b5] + NADH = 2 Fe(II)-[cytochrome b5] + NAD(+) + H(+). In terms of biological role, may mediate the reduction of outer membrane cytochrome b5. The polypeptide is NADH-cytochrome b5 reductase 2 (mcr1) (Emericella nidulans (strain FGSC A4 / ATCC 38163 / CBS 112.46 / NRRL 194 / M139) (Aspergillus nidulans)).